Reading from the N-terminus, the 543-residue chain is Hydroxylamine reductase (543 aa).

Residues cysteine 5, cysteine 8, cysteine 17, and cysteine 23 each contribute to the [4Fe-4S] cluster site. Residues histidine 236, glutamate 260, cysteine 304, cysteine 398, cysteine 426, cysteine 451, glutamate 486, and lysine 488 each coordinate hybrid [4Fe-2O-2S] cluster. Cysteine persulfide is present on cysteine 398.

The protein belongs to the HCP family. The cofactor is [4Fe-4S] cluster. Hybrid [4Fe-2O-2S] cluster is required as a cofactor.

The protein resides in the cytoplasm. The enzyme catalyses A + NH4(+) + H2O = hydroxylamine + AH2 + H(+). Functionally, catalyzes the reduction of hydroxylamine to form NH(3) and H(2)O. The polypeptide is Hydroxylamine reductase (Bacteroides fragilis (strain YCH46)).